Reading from the N-terminus, the 288-residue chain is MKYVFIEKHQAEFSIKAMCRVLRVARSGWYTWCQRRTRISTRQQFRQHCDSVVLAAFTRSKQRYCAPRLTDELRAQGYPFNVKTVAASLRCQGLRAKASRKFSPVSYRAHGLPVSENLLEQDFYASGPNQKWAGDITYLRTDEGWLYLAVVIDLWSRAVIGWSMSPRMTAQLACDALQMALWRRKRPWNVIVHTDRGGQYCSADYQAQLKRHNLRGSMSAKGCCYDNACVESFFHSLKVECIHGEHFISREIMRATVFNYIECDYNRWRRHSWCGGLSPEQFENQNLA.

In terms of domain architecture, Integrase catalytic spans 124-287; that stretch reads YASGPNQKWA…SPEQFENQNL (164 aa).

This sequence belongs to the transposase IS3/IS150/IS904 family.

Its function is as follows. Involved in the transposition of the insertion sequence IS3. The chain is Transposase InsF for insertion sequence IS3fB (insF7) from Escherichia coli (strain K12).